The chain runs to 94 residues: Large ribosomal subunit protein bL27 (94 aa).

Residues 1–9 (MLRLDLQFF) constitute a propeptide that is removed on maturation.

This sequence belongs to the bacterial ribosomal protein bL27 family. The N-terminus is cleaved by ribosomal processing cysteine protease Prp.

The protein is Large ribosomal subunit protein bL27 of Bacillus pumilus (strain SAFR-032).